The following is a 512-amino-acid chain: GMP synthase [glutamine-hydrolyzing] (512 aa).

One can recognise a Glutamine amidotransferase type-1 domain in the interval 3–196; it reads NILILDFGSQ…VKHICQTSET (194 aa). The active-site Nucleophile is C80. Residues H169 and E171 contribute to the active site. In terms of domain architecture, GMPS ATP-PPase spans 197-387; that stretch reads WKIETIEKQL…LGLPDVLISR (191 aa). 225-231 is a binding site for ATP; sequence SGGVDSS.

Homodimer.

The enzyme catalyses XMP + L-glutamine + ATP + H2O = GMP + L-glutamate + AMP + diphosphate + 2 H(+). Its pathway is purine metabolism; GMP biosynthesis; GMP from XMP (L-Gln route): step 1/1. Functionally, catalyzes the synthesis of GMP from XMP. In Chlamydia muridarum (strain MoPn / Nigg), this protein is GMP synthase [glutamine-hydrolyzing] (guaA).